The primary structure comprises 74 residues: Omega-conotoxin-like protein 1 (74 aa).

The N-terminal stretch at Met1–Ala20 is a signal peptide. 3 cysteine pairs are disulfide-bonded: Cys24-Cys38, Cys31-Cys43, and Cys37-Cys50.

As to expression, highly expressed in brain. Is also found in hemolymph.

In terms of biological role, the impact of this protein on the neuronal activity of the honeybee brain is not known. It does not affect apparent movement or hatching of blowfly larvae. However, when injected into fish, it induces a strong reversible paralytic effect. In addition, the presence of this small peptide in the hemolymph of adult drones together with its induction after bacterial infection suggests that this peptide exhibits antibacterial activity. This peptide may act by inhibiting ion channels. The protein is Omega-conotoxin-like protein 1 of Apis mellifera (Honeybee).